The primary structure comprises 629 residues: Genetic interactor of prohibitins 3, mitochondrial (629 aa).

The transit peptide at 1–19 (MFSRSILLRSVRKSLGRYY) directs the protein to the mitochondrion. Positions 52–71 (KPGYYRLPGQNDSNTDKKAK) are disordered. The CP-type G domain maps to 171–374 (IPKLQQVLST…LFDVPGFTTN (204 aa)).

It belongs to the TRAFAC class YlqF/YawG GTPase family. GEP3 subfamily.

It localises to the mitochondrion. Functionally, may be involved in the mitochondrial lipid metabolism. This Candida albicans (strain SC5314 / ATCC MYA-2876) (Yeast) protein is Genetic interactor of prohibitins 3, mitochondrial (GEP3).